A 361-amino-acid polypeptide reads, in one-letter code: Probable galacturonosyltransferase-like 7 (361 aa).

A helical; Signal-anchor for type II membrane protein membrane pass occupies residues 1 to 21 (MLWIMRFSGLFSAALVIIVLS). At 22 to 361 (PSLQSFPPAE…PYDLYGHYSR (340 aa)) the chain is on the lumenal side. N217 is a glycosylation site (N-linked (GlcNAc...) asparagine).

It belongs to the glycosyltransferase 8 family.

Its subcellular location is the golgi apparatus membrane. Its pathway is glycan metabolism; pectin biosynthesis. May be involved in pectin and/or xylans biosynthesis in cell walls. In Arabidopsis thaliana (Mouse-ear cress), this protein is Probable galacturonosyltransferase-like 7 (GATL7).